A 294-amino-acid polypeptide reads, in one-letter code: 4-hydroxy-tetrahydrodipicolinate synthase (294 aa).

Position 47 (Thr47) interacts with pyruvate. Residue Tyr135 is the Proton donor/acceptor of the active site. Lys163 serves as the catalytic Schiff-base intermediate with substrate. A pyruvate-binding site is contributed by Val205.

The protein belongs to the DapA family. Homotetramer; dimer of dimers.

It localises to the cytoplasm. It carries out the reaction L-aspartate 4-semialdehyde + pyruvate = (2S,4S)-4-hydroxy-2,3,4,5-tetrahydrodipicolinate + H2O + H(+). It participates in amino-acid biosynthesis; L-lysine biosynthesis via DAP pathway; (S)-tetrahydrodipicolinate from L-aspartate: step 3/4. In terms of biological role, catalyzes the condensation of (S)-aspartate-beta-semialdehyde [(S)-ASA] and pyruvate to 4-hydroxy-tetrahydrodipicolinate (HTPA). This Rickettsia bellii (strain RML369-C) protein is 4-hydroxy-tetrahydrodipicolinate synthase.